Consider the following 526-residue polypeptide: Rho guanine nucleotide exchange factor 3 (526 aa).

The tract at residues 20–40 (ELPPASGPAKDAEEPSNKRVK) is disordered. S47 and S70 each carry phosphoserine. The DH domain occupies 122–304 (KRQEAIFELS…QGIVAEINTK (183 aa)). The 159-residue stretch at 291-449 (INIIQGIVAE…WLNCIRQAKE (159 aa)) folds into the PH domain. The segment at 464–526 (EGSFLNPTTG…GNSRHGESNV (63 aa)) is disordered. Positions 466-475 (SFLNPTTGSR) are enriched in polar residues.

As to quaternary structure, interacts with RHOA and RHOB. Widely expressed. Highest levels are found in adult brain and skeletal muscle. Lower levels are found in heart and kidney.

The protein localises to the cytoplasm. Its function is as follows. Acts as a guanine nucleotide exchange factor (GEF) for RhoA and RhoB GTPases. The polypeptide is Rho guanine nucleotide exchange factor 3 (ARHGEF3) (Homo sapiens (Human)).